Consider the following 89-residue polypeptide: UPF0297 protein OB2008 (89 aa).

The protein belongs to the UPF0297 family.

The protein is UPF0297 protein OB2008 of Oceanobacillus iheyensis (strain DSM 14371 / CIP 107618 / JCM 11309 / KCTC 3954 / HTE831).